The chain runs to 79 residues: Cytochrome b-c1 complex subunit 10 (79 aa).

At 1–23 (MISFFPNKPMYHVQPHISFITPE) the chain is on the mitochondrial matrix side. Residues 24–47 (RTMKTIPAFSRWAFAAVAGVFVFA) traverse the membrane as a helical segment. Residues 48–79 (MQVPKVKTTILQPIAFIGDHFKDKTPEEDKWL) lie on the Mitochondrial intermembrane side of the membrane.

Belongs to the UQCR11/QCR10 family. As to quaternary structure, component of the ubiquinol-cytochrome c oxidoreductase (cytochrome b-c1 complex, complex III, CIII), a multisubunit enzyme composed of 3 respiratory subunits cytochrome b, cytochrome c1 and Rieske protein, 2 core protein subunits, and additional low-molecular weight protein subunits. The complex exists as an obligatory dimer and forms supercomplexes (SCs) in the inner mitochondrial membrane with cytochrome c oxidase (complex IV, CIV).

It is found in the mitochondrion inner membrane. Its function is as follows. Component of the ubiquinol-cytochrome c oxidoreductase, a multisubunit transmembrane complex that is part of the mitochondrial electron transport chain which drives oxidative phosphorylation. The respiratory chain contains 3 multisubunit complexes succinate dehydrogenase (complex II, CII), ubiquinol-cytochrome c oxidoreductase (cytochrome b-c1 complex, complex III, CIII) and cytochrome c oxidase (complex IV, CIV), that cooperate to transfer electrons derived from NADH and succinate to molecular oxygen, creating an electrochemical gradient over the inner membrane that drives transmembrane transport and the ATP synthase. The cytochrome b-c1 complex catalyzes electron transfer from ubiquinol to cytochrome c, linking this redox reaction to translocation of protons across the mitochondrial inner membrane, with protons being carried across the membrane as hydrogens on the quinol. In the process called Q cycle, 2 protons are consumed from the matrix, 4 protons are released into the intermembrane space and 2 electrons are passed to cytochrome c. QCR10 has a role in CIII assembly and RIP1 stability. This is Cytochrome b-c1 complex subunit 10 from Schizosaccharomyces pombe (strain 972 / ATCC 24843) (Fission yeast).